A 180-amino-acid polypeptide reads, in one-letter code: Translation machinery-associated protein 16 homolog (180 aa).

Positions 1–12 are enriched in basic and acidic residues; that stretch reads MTNLRKELEKCK. The disordered stretch occupies residues 1–32; it reads MTNLRKELEKCKHPNSRKTKALGKKARRQNNK. Basic residues predominate over residues 13–32; sequence HPNSRKTKALGKKARRQNNK.

This sequence belongs to the TMA16 family.

The sequence is that of Translation machinery-associated protein 16 homolog from Drosophila melanogaster (Fruit fly).